A 287-amino-acid polypeptide reads, in one-letter code: MAIRKFKPYTPGTRQRVVTDFSEITGSKPERSLIVSKHRNKGRNNRGVITCRHRGGGHKRQYRLVDFRRDKKNINAKVAAIHYDPHRNARLALLFYEDGEKRYIIAPAGIKVGQNVISGEGVPIEEGNAMPLSSMPLGSNVHCVELYAGRGAQMVRSAGASAQLMAKEGEYVALKLPSTEVRLVRKECYATLGEVGNSEIRNTSLGKAGRRRWLGRRPQVRGSVMNPCDHPHGGGEGKAPIGRAGPVTPWGKAALGLKTRKKNKPSNKLVVRRRRRISKRSRGGRDS.

Residues 221-287 (RGSVMNPCDH…SKRSRGGRDS (67 aa)) are disordered. A compositionally biased stretch (basic residues) spans 258–287 (KTRKKNKPSNKLVVRRRRRISKRSRGGRDS).

It belongs to the universal ribosomal protein uL2 family. Part of the 50S ribosomal subunit. Forms a bridge to the 30S subunit in the 70S ribosome.

Its function is as follows. One of the primary rRNA binding proteins. Required for association of the 30S and 50S subunits to form the 70S ribosome, for tRNA binding and peptide bond formation. It has been suggested to have peptidyltransferase activity; this is somewhat controversial. Makes several contacts with the 16S rRNA in the 70S ribosome. This is Large ribosomal subunit protein uL2 from Prochlorococcus marinus subsp. pastoris (strain CCMP1986 / NIES-2087 / MED4).